Consider the following 286-residue polypeptide: MSGTAEENTREVEAGVVTDFTREMSYGEYLHLDELLAAQHPLSTPEHHDELLFIVQHQTSELWLKLVLHELRSAMRAIAADDLKTALKNIARVKHIQRTLTEQWSVLATLTPTEYAQFRGFLANSSGFQSQQYRAVEFALGNKNAKMLDVFAHDGPGHAQLTELLEAPSLYDEFLRHLARRGHDVPAELLERDVTKAHVHTPALVATFRVIYEDAQRYWTEYEACEELVDLEENFQLWRFRHLKTVERTIGFKRGTGGSSGVGFLARALDLTFFPELYAVRTEIGS.

Substrate contacts are provided by residues 53-57 (FIVQH), tyrosine 115, and arginine 119. Histidine 242 provides a ligand contact to heme. Threonine 256 lines the substrate pocket.

Belongs to the tryptophan 2,3-dioxygenase family. Homotetramer. Heme serves as cofactor.

The catalysed reaction is L-tryptophan + O2 = N-formyl-L-kynurenine. It participates in amino-acid degradation; L-tryptophan degradation via kynurenine pathway; L-kynurenine from L-tryptophan: step 1/2. Functionally, heme-dependent dioxygenase that catalyzes the oxidative cleavage of the L-tryptophan (L-Trp) pyrrole ring and converts L-tryptophan to N-formyl-L-kynurenine. Catalyzes the oxidative cleavage of the indole moiety. In Kineococcus radiotolerans (strain ATCC BAA-149 / DSM 14245 / SRS30216), this protein is Tryptophan 2,3-dioxygenase.